The chain runs to 457 residues: SH3 domain-binding protein 5 (457 aa).

The span at methionine 1 to glutamate 12 shows a compositional bias: basic and acidic residues. A disordered region spans residues methionine 1–leucine 68. Positions glutamate 25–valine 43 are enriched in acidic residues. The tract at residues methionine 33–alanine 267 is sufficient for interaction with RAB11A and for guanine nucleotide exchange activity. Residues aspartate 44–lysine 53 show a composition bias toward basic and acidic residues. 4 coiled-coil regions span residues arginine 46–lysine 92, aspartate 99–glutamate 147, alanine 156–lysine 202, and tyrosine 213–aspartate 257. Residues asparagine 308–glutamate 319 show a composition bias toward acidic residues. The segment at asparagine 308–glycine 347 is disordered. Low complexity predominate over residues serine 322–serine 334. Serine 353 carries the phosphoserine; by MAPK12 and MAPK9 modification. The tract at residues serine 371–glutamine 427 is disordered. Residues serine 377 and serine 378 each carry the phosphoserine modification. The segment covering glutamate 382 to aspartate 398 has biased composition (basic and acidic residues). Residues leucine 406–glutamine 427 are compositionally biased toward low complexity. Position 420 is a phosphoserine (serine 420). A Phosphoserine; by MAPK12 modification is found at serine 423.

The protein belongs to the SH3BP5 family. In terms of assembly, interacts with BTK. Interacts with all isoforms of MAPK8, MAPK9, MAPK10 and MAPK12. Interacts with GDP-bound and nucleotide-free forms of RAB11A.

The protein resides in the cytoplasmic vesicle membrane. It is found in the mitochondrion. Functions as a guanine nucleotide exchange factor (GEF) with specificity for RAB11A and RAB25. Inhibits the auto- and transphosphorylation activity of BTK. Plays a negative regulatory role in BTK-related cytoplasmic signaling in B-cells. May be involved in BCR-induced apoptotic cell death. In Rattus norvegicus (Rat), this protein is SH3 domain-binding protein 5 (Sh3bp5).